A 710-amino-acid polypeptide reads, in one-letter code: MVKRASFCLLSCLIILFLSSVSAIIYDPQDKQVYVVYMGSLPSQPNYTPMSNHINILQEVTGESSIEGRLVRSYKRSFNGFSALLTESEREGVAEMEGVVSVFRSKNYKLQTTASWDFMGMKEGKNTKRNFAVESDTIIGFIDSGIWPESESFSDKGFGPPPKKWKGVCKGGKNFTCNNKLIGARDYTSEGTRDLQGHGTHTTSTAAGNAVADTSFFGIGNGTARGGVPASRVAAYKVCTITGCSDDNVLSAFDDAIADGVDLISVSLGGDYPSLYAEDTIAIGAFHAMAKGILTVHSAGNAGPNPTTVVSVAPWMLTVAATTTNRRFLTKVVLGNGKTLVGKSVNAFDLKGKKYPLEYGDYLNESLVKGKILVSRYLSGSEVAVSFITTDNKDYASISSRPLSVLSQDDFDSLVSYINSTRSPQGSVLKTEAIFNQLSPKVASFSSRGPNTIAVDILKPDISAPGVEILAAYSPLSLPSEDRRDKRRVKYSVLSGTSMACPHVTGVAAYIKTFHPDWSPSVIQSAIMTTAWQMNATGTGAESTEFAYGAGHVDPIAAINPGLVYELNKTDHISFLCGMNYTSKTLKLISGDAVICSGKTLQRNLNYPSMSAKLSESNSSFTVTFKRTVTNLGTANSTYKSKIVLNHGSKLNVKVSPSVLSMKSLKEKQSFTVTVSGSNIDPKLPSSANLIWSDGTHNVRSPIVVYIDGY.

Residues 1-23 form the signal peptide; it reads MVKRASFCLLSCLIILFLSSVSA. Residues 24-111 constitute a propeptide, activation peptide; that stretch reads IIYDPQDKQV…VFRSKNYKLQ (88 aa). The region spanning 33-110 is the Inhibitor I9 domain; that stretch reads VYVVYMGSLP…SVFRSKNYKL (78 aa). Positions 115–559 constitute a Peptidase S8 domain; sequence SWDFMGMKEG…AGHVDPIAAI (445 aa). Residue aspartate 143 is the Charge relay system of the active site. N-linked (GlcNAc...) asparagine glycosylation occurs at asparagine 174. Histidine 198 (charge relay system) is an active-site residue. 3 N-linked (GlcNAc...) asparagine glycosylation sites follow: asparagine 221, asparagine 364, and asparagine 419. Positions 354–414 constitute a PA domain; sequence KYPLEYGDYL…VLSQDDFDSL (61 aa). The Charge relay system role is filled by serine 498. N-linked (GlcNAc...) asparagine glycans are attached at residues asparagine 535, asparagine 568, asparagine 580, asparagine 618, and asparagine 636.

The protein belongs to the peptidase S8 family. The C-terminal propeptide is autocleaved.

It is found in the secreted. The sequence is that of Subtilisin-like protease SBT4.8 from Arabidopsis thaliana (Mouse-ear cress).